The chain runs to 328 residues: Ketol-acid reductoisomerase (NADP(+)) (328 aa).

The KARI N-terminal Rossmann domain occupies 2 to 182; it reads AKIYRDGDAS…GATRAGVIET (181 aa). Residues 25-28, arginine 48, serine 53, and 83-86 each bind NADP(+); these read YGIQ and DMEQ. The active site involves histidine 108. Residue glycine 134 participates in NADP(+) binding. Residues 183–328 enclose the KARI C-terminal knotted domain; sequence TFAEETETDL…AEMRKLLFGP (146 aa). Aspartate 191, glutamate 195, glutamate 227, and glutamate 231 together coordinate Mg(2+). Serine 252 lines the substrate pocket.

The protein belongs to the ketol-acid reductoisomerase family. It depends on Mg(2+) as a cofactor.

The enzyme catalyses (2R)-2,3-dihydroxy-3-methylbutanoate + NADP(+) = (2S)-2-acetolactate + NADPH + H(+). It carries out the reaction (2R,3R)-2,3-dihydroxy-3-methylpentanoate + NADP(+) = (S)-2-ethyl-2-hydroxy-3-oxobutanoate + NADPH + H(+). Its pathway is amino-acid biosynthesis; L-isoleucine biosynthesis; L-isoleucine from 2-oxobutanoate: step 2/4. It functions in the pathway amino-acid biosynthesis; L-valine biosynthesis; L-valine from pyruvate: step 2/4. In terms of biological role, involved in the biosynthesis of branched-chain amino acids (BCAA). Catalyzes an alkyl-migration followed by a ketol-acid reduction of (S)-2-acetolactate (S2AL) to yield (R)-2,3-dihydroxy-isovalerate. In the isomerase reaction, S2AL is rearranged via a Mg-dependent methyl migration to produce 3-hydroxy-3-methyl-2-ketobutyrate (HMKB). In the reductase reaction, this 2-ketoacid undergoes a metal-dependent reduction by NADPH to yield (R)-2,3-dihydroxy-isovalerate. The sequence is that of Ketol-acid reductoisomerase (NADP(+)) from Pyrobaculum calidifontis (strain DSM 21063 / JCM 11548 / VA1).